Reading from the N-terminus, the 1389-residue chain is CRISPR-associated endoribonuclease Cas13a (1389 aa).

The segment at 1–347 (MGNLFGHKRW…DKHEKFKIER (347 aa)) is NTD. Position 219 (arginine 219) interacts with crRNA. Binds crRNA stretches follow at residues 330–342 (YIKSYVLLDKHEK), 405–408 (KKHY), and 432–436 (YRYLK). The tract at residues 348–498 (ENKKDKIVKF…KLRHNDIDMT (151 aa)) is helical-1. Catalysis depends on for pre-crRNA processing residues arginine 438 and lysine 441. CrRNA is bound at residue lysine 441. A binds crRNA region spans residues 471 to 475 (KILKR). CrRNA is bound at residue lysine 489. Positions 499–636 (TVNTDDFSRL…LKISDEEVSK (138 aa)) are HEPN-like fold 1-I. The segment at 502–509 (TDDFSRLH) is binds crRNA. Catalysis depends on for target ssRNA cleavage residues arginine 597 and histidine 602. The segment at 637–828 (ALNLDVVFKD…ERITVKTSDK (192 aa)) is helical-2. Glutamine 759 provides a ligand contact to crRNA. The segment at 829 to 899 (TIVINDDFEY…ECITENWNLN (71 aa)) is HEPN-like fold 1-II. Positions 853–858 (NKIRNR) are binds crRNA. A crRNA-binding site is contributed by tryptophan 865. Coiled-coil stretches lie at residues 893-920 (TENWNLNLEEFIQKMKEIEKDFDDFKIQ), 968-1046 (EIDK…FQEI), and 1101-1131 (KNKISEIDAILKNLNDKLNGYSKEYKEKYIK). Positions 900-1170 (LEEFIQKMKE…EYKKIRDLVE (271 aa)) are linker. Residues 1170–1290 (EFNYLNKIES…ISHFYIVRNP (121 aa)) are HEPN-like fold 2. Residues arginine 1278 and histidine 1283 each act as for target ssRNA cleavage in the active site. Binds crRNA stretches follow at residues 1311–1316 (TRYNNS) and 1338–1339 (KK).

The protein belongs to the CRISPR-associated endoribonuclease Cas13a family. In terms of assembly, monomer. Mg(2+) is required as a cofactor.

Its activity is regulated as follows. RNase activity on target is decreased by EDTA. Target RNA acts as an activator for non-specific ssRNA degradation. Functionally, CRISPR (clustered regularly interspaced short palindromic repeat), is an adaptive immune system that provides protection against mobile genetic elements (viruses, transposable elements and conjugative plasmids). CRISPR clusters contain sequences complementary to antecedent mobile elements (spacers) and target invading nucleic acids. Unlike many single-component effectors, this CRISPR-Cas system targets RNA. CRISPR clusters are transcribed from pre-CRISPR RNA (crRNA) and processed into crRNA (optimally 28 nucleotides in this system) by this protein. This protein processes pre-crRNA at a 'non-typical' site 1 nucleotide upstream of the pre-crRNA stem-loop; it cleaves pre-crRNA from L.buccalis and L.wadei in a similar fashion, whereas the enzymes from the latter 2 bacteria cleave their own pre-crRNA 3 nt further upstream. When the appropriate target sequences are cloned into the CRISPR array, confers immunity to ssRNA(+) enterobacteria phage MS2. Cleaves linear target ssRNA in a crRNA-dependent fashion, preferentially before U residues; has no activity on partially dsRNA, ssDNA or dsDNA. RNA secondary structure surrounding the target influence the cleavage site and efficiency; unlike other CRISPR-Cas effectors Cas13a cleaves outside of the crRNA binding site. In the presence of a viable RNA target other RNAs are also degraded (called collateral RNA degradation), suggesting this type of CRISPR-Cas might also prevent viral spread by inducing programmed cell death or dormancy. This system has a 3' protospacer flanking site (PFS), it does not cleave when the 3' PFS is G (PFS is equivalent to PAM, the protospacer adjacent motif). Mutations of its active site residues results in an RNA-programmed RNA-binding protein. This chain is CRISPR-associated endoribonuclease Cas13a, found in Leptotrichia shahii (strain DSM 19757 / CCUG 47503 / CIP 107916 / JCM 16776 / LB37).